A 113-amino-acid chain; its full sequence is Cell cycle protein GpsB (113 aa).

Positions 36-65 (IKDYETYAALVKSLRQEIADLKEELARKPQ) form a coiled coil. Residues 61-82 (ARKPQVSSAPSPSHPDPIDVAA) are disordered.

It belongs to the GpsB family. Forms polymers through the coiled coil domains. Interacts with PBP1, MreC and EzrA.

It is found in the cytoplasm. In terms of biological role, divisome component that associates with the complex late in its assembly, after the Z-ring is formed, and is dependent on DivIC and PBP2B for its recruitment to the divisome. Together with EzrA, is a key component of the system that regulates PBP1 localization during cell cycle progression. Its main role could be the removal of PBP1 from the cell pole after pole maturation is completed. Also contributes to the recruitment of PBP1 to the division complex. Not essential for septum formation. The chain is Cell cycle protein GpsB from Streptococcus pneumoniae (strain Hungary19A-6).